Consider the following 449-residue polypeptide: Trigger factor (449 aa).

Residues 172-257 form the PPIase FKBP-type domain; the sequence is GDRVTVDFVG…LKQVEWAHLP (86 aa).

It belongs to the FKBP-type PPIase family. Tig subfamily.

The protein localises to the cytoplasm. It carries out the reaction [protein]-peptidylproline (omega=180) = [protein]-peptidylproline (omega=0). Its function is as follows. Involved in protein export. Acts as a chaperone by maintaining the newly synthesized protein in an open conformation. Functions as a peptidyl-prolyl cis-trans isomerase. The chain is Trigger factor from Ralstonia nicotianae (strain ATCC BAA-1114 / GMI1000) (Ralstonia solanacearum).